The sequence spans 144 residues: Nucleoside diphosphate kinase (144 aa).

ATP-binding residues include lysine 11, phenylalanine 59, arginine 87, threonine 93, arginine 104, and asparagine 114. The active-site Pros-phosphohistidine intermediate is the histidine 117.

The protein belongs to the NDK family. In terms of assembly, homotetramer. Mg(2+) is required as a cofactor.

It localises to the cytoplasm. The enzyme catalyses a 2'-deoxyribonucleoside 5'-diphosphate + ATP = a 2'-deoxyribonucleoside 5'-triphosphate + ADP. It catalyses the reaction a ribonucleoside 5'-diphosphate + ATP = a ribonucleoside 5'-triphosphate + ADP. In terms of biological role, major role in the synthesis of nucleoside triphosphates other than ATP. The ATP gamma phosphate is transferred to the NDP beta phosphate via a ping-pong mechanism, using a phosphorylated active-site intermediate. The polypeptide is Nucleoside diphosphate kinase (Sorangium cellulosum (strain So ce56) (Polyangium cellulosum (strain So ce56))).